The following is a 664-amino-acid chain: Macrolide export ATP-binding/permease protein MacB (664 aa).

Residues 8-246 (LEVHNLVREF…ELNKDPDAAP (239 aa)) enclose the ABC transporter domain. 44–51 (GQSGSGKS) contacts ATP. The next 4 helical transmembrane spans lie at 287–307 (FLTMLGIIIGIASVVTVVALG), 543–563 (IAVISLIVGGIGVMNIMLVSV), 587–607 (FLIEAILVCLIGGVLGVLLSL), and 629–649 (SIVAAFVCSTLIGVVFGFLPA).

The protein belongs to the ABC transporter superfamily. Macrolide exporter (TC 3.A.1.122) family. As to quaternary structure, homodimer. Part of the tripartite efflux system MacAB-TolC, which is composed of an inner membrane transporter, MacB, a periplasmic membrane fusion protein, MacA, and an outer membrane component, TolC. The complex forms a large protein conduit and can translocate molecules across both the inner and outer membranes. Interacts with MacA.

Its subcellular location is the cell inner membrane. In terms of biological role, part of the tripartite efflux system MacAB-TolC. MacB is a non-canonical ABC transporter that contains transmembrane domains (TMD), which form a pore in the inner membrane, and an ATP-binding domain (NBD), which is responsible for energy generation. Confers resistance against macrolides. This chain is Macrolide export ATP-binding/permease protein MacB, found in Acinetobacter baylyi (strain ATCC 33305 / BD413 / ADP1).